We begin with the raw amino-acid sequence, 180 residues long: Large ribosomal subunit protein uL5 (180 aa).

This sequence belongs to the universal ribosomal protein uL5 family. Part of the 50S ribosomal subunit; part of the 5S rRNA/L5/L18/L25 subcomplex. Contacts the 5S rRNA and the P site tRNA. Forms a bridge to the 30S subunit in the 70S ribosome.

Its function is as follows. This is one of the proteins that bind and probably mediate the attachment of the 5S RNA into the large ribosomal subunit, where it forms part of the central protuberance. In the 70S ribosome it contacts protein S13 of the 30S subunit (bridge B1b), connecting the 2 subunits; this bridge is implicated in subunit movement. Contacts the P site tRNA; the 5S rRNA and some of its associated proteins might help stabilize positioning of ribosome-bound tRNAs. The sequence is that of Large ribosomal subunit protein uL5 from Solibacter usitatus (strain Ellin6076).